The primary structure comprises 478 residues: Divinyl ether synthase CYP74D3 (478 aa).

Residue Cys-432 coordinates heme.

Belongs to the cytochrome P450 family. 9-divinyl ether synthase subfamily. Not detected in leaves, stems or roots of healthy plants.

Its subcellular location is the cytoplasm. The protein resides in the cytosol. The enzyme catalyses (9S)-hydroperoxy-(10E,12Z)-octadecadienoate = colneleate + H2O. It carries out the reaction (9S)-hydroperoxy-(10E,12Z,15Z)-octadecatrienoate = colnelenate + H2O. Strictly inducible cytochrome P450 involved in the biosynthesis of the anti-fungal toxins colneleate and colnelenate. Can use (9S)-hydroperoxy-(10E,12Z)-octadecadienoate (9-HPOD) and (9S)-hydroperoxy-(10E,12Z,15Z)-octadecatrienoate (9-HPOT) as substrates, but has a very low activity with the corresponding 13-hydroperoxides (13-HPOD and 13-POT). The protein is Divinyl ether synthase CYP74D3 of Nicotiana tabacum (Common tobacco).